The following is a 92-amino-acid chain: Small ribosomal subunit protein uS19 (92 aa).

This sequence belongs to the universal ribosomal protein uS19 family.

Functionally, protein S19 forms a complex with S13 that binds strongly to the 16S ribosomal RNA. In Nostoc sp. (strain PCC 7120 / SAG 25.82 / UTEX 2576), this protein is Small ribosomal subunit protein uS19.